The primary structure comprises 38 residues: Photosystem II reaction center protein M (38 aa).

A helical membrane pass occupies residues 7-27 (GFVASILFVLVPSVFLIILYI).

Belongs to the PsbM family. PSII is composed of 1 copy each of membrane proteins PsbA, PsbB, PsbC, PsbD, PsbE, PsbF, PsbH, PsbI, PsbJ, PsbK, PsbL, PsbM, PsbT, PsbX, PsbY, PsbZ, Psb30/Ycf12, peripheral proteins PsbO, CyanoQ (PsbQ), PsbU, PsbV and a large number of cofactors. It forms dimeric complexes.

Its subcellular location is the cellular thylakoid membrane. One of the components of the core complex of photosystem II (PSII). PSII is a light-driven water:plastoquinone oxidoreductase that uses light energy to abstract electrons from H(2)O, generating O(2) and a proton gradient subsequently used for ATP formation. It consists of a core antenna complex that captures photons, and an electron transfer chain that converts photonic excitation into a charge separation. This subunit is found at the monomer-monomer interface. This chain is Photosystem II reaction center protein M, found in Nostoc sp. (strain PCC 7120 / SAG 25.82 / UTEX 2576).